A 439-amino-acid chain; its full sequence is Homogentisate 1,2-dioxygenase (439 aa).

Residues histidine 335, glutamate 341, and histidine 371 each coordinate Fe cation.

It belongs to the homogentisate dioxygenase family. Fe cation serves as cofactor.

The enzyme catalyses homogentisate + O2 = 4-maleylacetoacetate + H(+). Its pathway is amino-acid degradation; L-phenylalanine degradation; acetoacetate and fumarate from L-phenylalanine: step 4/6. This Drosophila melanogaster (Fruit fly) protein is Homogentisate 1,2-dioxygenase.